The chain runs to 463 residues: MAEHHYDVVVIGAGPSGEGAAMNAAKHNRRVAIIEDKPTVGGNCTHWGTIPSKALRHSVKQIITFNTNQMFRDIGEPRWFSFPRVLQNAQKVIGKQVKLRTQFYSRNRVDLINGRAAFVDKHRLEIRGNKSVETIHFKQAIIATGSRPYLPPDVDFRHHRIYNSDSILNLSHTPRTLIIYGAGVIGSEYASIFAGLGVKVDLINPGSRLLSFLDDEISDALSYHLRNNGVLVRHNEQYESVKGDDHGVVLSLQSGKKIRADAFLWCNGRSGNTENLGLENVGLTPNSRGQLAVDEHYRTEVEHIYAAGDVIGWPSLASAAYDQGRAASSDITQDEYFRFVDDVPTGIYTIPEISSVGKTERELTEAKVPYDVGQAFFKDLARAQITGEAVGMLKILFHRETREILGIHCFGDQAAEIVHIGQAIMNQEGEANSLNYFINTTFNYPTMAEAYRVAALNGLNRIF.

35 to 44 is an FAD binding site; it reads EDKPTVGGNC.

The protein belongs to the class-I pyridine nucleotide-disulfide oxidoreductase family. It depends on FAD as a cofactor.

The protein resides in the cytoplasm. The enzyme catalyses NAD(+) + NADPH = NADH + NADP(+). Its function is as follows. Conversion of NADPH, generated by peripheral catabolic pathways, to NADH, which can enter the respiratory chain for energy generation. This Marinobacter nauticus (strain ATCC 700491 / DSM 11845 / VT8) (Marinobacter aquaeolei) protein is Soluble pyridine nucleotide transhydrogenase.